Here is a 201-residue protein sequence, read N- to C-terminus: ATP-dependent Clp protease proteolytic subunit (201 aa).

The active-site Nucleophile is the Ser98. His123 is an active-site residue.

Belongs to the peptidase S14 family. Fourteen ClpP subunits assemble into 2 heptameric rings which stack back to back to give a disk-like structure with a central cavity, resembling the structure of eukaryotic proteasomes.

The protein resides in the cytoplasm. It carries out the reaction Hydrolysis of proteins to small peptides in the presence of ATP and magnesium. alpha-casein is the usual test substrate. In the absence of ATP, only oligopeptides shorter than five residues are hydrolyzed (such as succinyl-Leu-Tyr-|-NHMec, and Leu-Tyr-Leu-|-Tyr-Trp, in which cleavage of the -Tyr-|-Leu- and -Tyr-|-Trp bonds also occurs).. Cleaves peptides in various proteins in a process that requires ATP hydrolysis. Has a chymotrypsin-like activity. Plays a major role in the degradation of misfolded proteins. This chain is ATP-dependent Clp protease proteolytic subunit, found in Rickettsia conorii (strain ATCC VR-613 / Malish 7).